A 61-amino-acid chain; its full sequence is Large ribosomal subunit protein uL30 (61 aa).

The protein belongs to the universal ribosomal protein uL30 family. As to quaternary structure, part of the 50S ribosomal subunit.

In Colwellia psychrerythraea (strain 34H / ATCC BAA-681) (Vibrio psychroerythus), this protein is Large ribosomal subunit protein uL30.